The chain runs to 518 residues: Glutamate--cysteine ligase (518 aa).

This sequence belongs to the glutamate--cysteine ligase type 1 family. Type 1 subfamily.

It carries out the reaction L-cysteine + L-glutamate + ATP = gamma-L-glutamyl-L-cysteine + ADP + phosphate + H(+). It functions in the pathway sulfur metabolism; glutathione biosynthesis; glutathione from L-cysteine and L-glutamate: step 1/2. This is Glutamate--cysteine ligase from Klebsiella pneumoniae (strain 342).